The chain runs to 728 residues: MSWFADLAGRAEDLLNRVDQGAATALRKESTSNTFYSKNTDYPELHQQNTDSTYHTGQKANYISSAADNIRHQKATIIAGTANVKVGSRTGGDASHPTEHASVPRPSSHFVRRKKSEPDDELLFDFLNSSQKEPTGRVEIKKEKGKAPVLPSSQSSAVSSVTTSVTTIKATEENSGSQSPEVSSSDSMPEGHKKSTEESTVSNAISVEHSSVPSDGSMSHELSNLRLENQLLRNEVQSLNQEMASLLQRSKETQEELNEARVRVEKWNVDNSKSDRITRELRAQVDDLTEAVAAKDSQLAVLKVRLQEADQVLSSRTEALEALQSEKSRIMQDHNEGSSLQNQALQTLQERHEADATLKREQESYKQMQSEFATRLNKMEVERQNLAEAVTLAERKYSEERKKVDDLQQQVKLHRSSLESAKQELVDYKQKATRILQSKEKLINSLKEGSSFEGLDSSTASSMELEELRHERELQKEEIQKLMGQIHQLRSELQDMEAQQVSEAESAREQLQDLQDQIAKQRASKQELETELDRMKQEFHYVEEDLHRTKNTLQSRIKDREEEIQKLRNQLTNKTLSNSSQSELESRLHQLTETLIQKQTLLESLSTEKNSLVFQLERLEQQLHSAATGPSSGSSINMSGVDSGEGTRLRNVPVLFNDTETNLAGMYGKVRKAASSIDQFSIRLGIFLRRYPIARVFVIIYMALLHLWVMIVLLTYSPEMHHDQPYGK.

Residue serine 2 is modified to N-acetylserine. The Cytoplasmic segment spans residues 2–695; the sequence is SWFADLAGRA…IFLRRYPIAR (694 aa). Dimethylated arginine is present on residues arginine 27 and arginine 89. A disordered region spans residues 88–202; sequence SRTGGDASHP…KKSTEESTVS (115 aa). Serine 116 is modified (phosphoserine). The segment covering 134–146 has biased composition (basic and acidic residues); it reads PTGRVEIKKEKGK. Residues 152 to 167 show a composition bias toward low complexity; the sequence is SSQSSAVSSVTTSVTT. Polar residues predominate over residues 173 to 187; sequence ENSGSQSPEVSSSDS. Residues 216 to 628 are a coiled coil; it reads GSMSHELSNL…LEQQLHSAAT (413 aa). The helical; Anchor for type IV membrane protein transmembrane segment at 696–716 threads the bilayer; the sequence is VFVIIYMALLHLWVMIVLLTY. Residues 717 to 728 lie on the Lumenal side of the membrane; that stretch reads SPEMHHDQPYGK.

Homodimer. Interacts with RAB1A that has been activated by GTP-binding. Interacts with isoform CASP of CUX1. Highly phosphorylated during mitosis. Phosphorylation is barely detectable during interphase.

It is found in the golgi apparatus membrane. In terms of biological role, involved in maintaining Golgi structure. Stimulates the formation of Golgi stacks and ribbons. Involved in intra-Golgi retrograde transport. The polypeptide is Golgin subfamily A member 5 (Golga5) (Rattus norvegicus (Rat)).